Consider the following 189-residue polypeptide: Probable nicotinate-nucleotide adenylyltransferase (189 aa).

It belongs to the NadD family.

The enzyme catalyses nicotinate beta-D-ribonucleotide + ATP + H(+) = deamido-NAD(+) + diphosphate. The protein operates within cofactor biosynthesis; NAD(+) biosynthesis; deamido-NAD(+) from nicotinate D-ribonucleotide: step 1/1. Catalyzes the reversible adenylation of nicotinate mononucleotide (NaMN) to nicotinic acid adenine dinucleotide (NaAD). The protein is Probable nicotinate-nucleotide adenylyltransferase of Bacillus anthracis (strain CDC 684 / NRRL 3495).